We begin with the raw amino-acid sequence, 147 residues long: Peptide methionine sulfoxide reductase MsrB (147 aa).

A compositionally biased stretch (basic and acidic residues) spans 1–11; that stretch reads MPKIVKKEPKF. The disordered stretch occupies residues 1–25; it reads MPKIVKKEPKFVEQSGKKVTKSDEQ. The 123-residue stretch at 23–145 folds into the MsrB domain; sequence DEQWREQLSD…NSVSLIFNKS (123 aa). Zn(2+) contacts are provided by Cys-62, Cys-65, Cys-111, and Cys-114. Cys-134 (nucleophile) is an active-site residue.

This sequence belongs to the MsrB Met sulfoxide reductase family. Requires Zn(2+) as cofactor.

It catalyses the reaction L-methionyl-[protein] + [thioredoxin]-disulfide + H2O = L-methionyl-(R)-S-oxide-[protein] + [thioredoxin]-dithiol. The sequence is that of Peptide methionine sulfoxide reductase MsrB from Vibrio parahaemolyticus serotype O3:K6 (strain RIMD 2210633).